The sequence spans 78 residues: U-scoloptoxin(04)-Er1b (78 aa).

The first 24 residues, 1–24 (MTRHLIFAAVLLVCLFVCWNAVGA), serve as a signal peptide directing secretion. A propeptide spanning residues 25–28 (QDAR) is cleaved from the precursor.

This sequence belongs to the scoloptoxin-04 family. Post-translationally, contains 2 disulfide bonds. As to expression, expressed by the venom gland.

It localises to the secreted. This Ethmostigmus rubripes (Giant centipede) protein is U-scoloptoxin(04)-Er1b.